The following is a 487-amino-acid chain: Transmembrane protein 161B (487 aa).

A glycan (N-linked (GlcNAc...) asparagine) is linked at asparagine 34. The chain crosses the membrane as a helical span at residues 107-127 (LVDFTVAATIVYLVTEVYYSF). Asparagine 135 is a glycosylation site (N-linked (GlcNAc...) asparagine). Helical transmembrane passes span 136 to 156 (ISLV…FSLT) and 169 to 189 (SVCV…LIVT). Asparagine 203 carries an N-linked (GlcNAc...) asparagine glycan. The next 5 helical transmembrane spans lie at 228 to 248 (FKFF…FPGL), 265 to 285 (ITQT…LLWV), 305 to 325 (LMTE…LCVL), 367 to 387 (VFYY…MLLH), and 459 to 479 (LSFL…FGLF).

The protein belongs to the TMEM161 family.

The protein resides in the cell membrane. Functionally, essential for maintaining normal cardiac rhythm in the developing heart and for neonatal survival. Inhibits potassium and calcium currents in the cardiomyocytes, this assists in timely action potential repolarization and thereby maintains normal cardiac rhythm. The sequence is that of Transmembrane protein 161B (Tmem161b) from Mus musculus (Mouse).